Reading from the N-terminus, the 78-residue chain is Large ribosomal subunit protein bL28 (78 aa).

Residues methionine 1–histidine 20 are disordered.

Belongs to the bacterial ribosomal protein bL28 family.

The chain is Large ribosomal subunit protein bL28 from Photobacterium profundum (strain SS9).